An 80-amino-acid chain; its full sequence is HssA/B-like protein 2 (80 aa).

The interval 1–29 (MSLLSALTSISKPMNTSSKSSVSSKNVSG) is disordered. Positions 9-29 (SISKPMNTSSKSSVSSKNVSG) are enriched in low complexity.

This sequence belongs to the hssA/B family.

This is HssA/B-like protein 2 (hssl2) from Dictyostelium discoideum (Social amoeba).